The chain runs to 408 residues: Imidazolonepropionase (408 aa).

Fe(3+) is bound by residues H73 and H75. Zn(2+) contacts are provided by H73 and H75. R82, Y145, and H178 together coordinate 4-imidazolone-5-propanoate. Y145 serves as a coordination point for N-formimidoyl-L-glutamate. Residue H243 participates in Fe(3+) binding. A Zn(2+)-binding site is contributed by H243. Q246 serves as a coordination point for 4-imidazolone-5-propanoate. D318 is a binding site for Fe(3+). Zn(2+) is bound at residue D318. Residues N320 and G322 each contribute to the N-formimidoyl-L-glutamate site. S323 lines the 4-imidazolone-5-propanoate pocket.

This sequence belongs to the metallo-dependent hydrolases superfamily. HutI family. Zn(2+) is required as a cofactor. Requires Fe(3+) as cofactor.

It is found in the cytoplasm. The catalysed reaction is 4-imidazolone-5-propanoate + H2O = N-formimidoyl-L-glutamate. The protein operates within amino-acid degradation; L-histidine degradation into L-glutamate; N-formimidoyl-L-glutamate from L-histidine: step 3/3. Functionally, catalyzes the hydrolytic cleavage of the carbon-nitrogen bond in imidazolone-5-propanoate to yield N-formimidoyl-L-glutamate. It is the third step in the universal histidine degradation pathway. The chain is Imidazolonepropionase from Shewanella sp. (strain W3-18-1).